The chain runs to 384 residues: Gastrin-releasing peptide receptor (384 aa).

Topologically, residues 1–39 (MDPNNCSHLNLEVDPFLSCNNTFNQTLNPPKMDNWFHPG) are extracellular. N-linked (GlcNAc...) asparagine glycosylation is found at asparagine 5, asparagine 20, and asparagine 24. A helical membrane pass occupies residues 40–63 (IIYVIPAVYGLIIVIGLIGNITLI). Over 64–77 (KIFCTVKSMRNVPN) the chain is Cytoplasmic. The chain crosses the membrane as a helical span at residues 78-97 (LFISSLALGDLLLLVTCAPV). Over 98–115 (DASKYLADRWLFGRIGCK) the chain is Extracellular. Residues cysteine 114 and cysteine 197 are joined by a disulfide bond. The chain crosses the membrane as a helical span at residues 116 to 137 (LIPFIQLTSVGVSVFTLTALSA). Residues 138-153 (DRYKAIVRPMDIQASH) lie on the Cytoplasmic side of the membrane. The helical transmembrane segment at 154-175 (ALMKICLKAALIWIVSMLLAIP) threads the bilayer. Topologically, residues 176–209 (EAVFSDLHPFHVKDTNQTFISCAPYPHSNELHPK) are extracellular. A helical membrane pass occupies residues 210 to 235 (IHSMASFLVFYIIPLSIISVYYYFIA). Topologically, residues 236-265 (RNLIQSAYNLPVEGNIHVKKQIESRKRLAK) are cytoplasmic. The chain crosses the membrane as a helical span at residues 266–286 (TVLVFVGLFAFCWLPNHVIYL). Topologically, residues 287 to 299 (YRSYHYSEVDTSM) are extracellular. Residues 300–326 (LHFITSICARLLAFTNSCVNPFALYLL) traverse the membrane as a helical segment. Residues 327 to 384 (SKSFRKQFNTQLLCCQPSLLNRSHSTGRSTTCMTSFKSTNPSATFSLINGNICHEGYV) are Cytoplasmic-facing. Cysteine 340 carries S-palmitoyl cysteine lipidation. Serine 351 carries the post-translational modification Phosphoserine.

Belongs to the G-protein coupled receptor 1 family. As to expression, expressed in the hippocampal CA1 region (at protein level).

The protein resides in the cell membrane. Its function is as follows. Receptor for gastrin-releasing peptide (GRP). Signals via association with G proteins that activate a phosphatidylinositol-calcium second messenger system, resulting in Akt phosphorylation. Contributes to the regulation of food intake. Contributes to the perception of prurient stimuli and transmission of itch signals in the spinal cord that promote scratching behavior, but does not play a role in the perception of pain. Contributes primarily to nonhistaminergic itch sensation. In one study, shown to act in the amygdala as part of an inhibitory network which inhibits memory specifically related to learned fear. In another study, shown to contribute to disinhibition of glutamatergic cells in the auditory cortex via signaling on vasoactive intestinal peptide-expressing cells which leads to enhanced auditory fear memories. Contributes to the induction of sighing through signaling in the pre-Botzinger complex, a cluster of several thousand neurons in the ventrolateral medulla responsible for inspiration during respiratory activity. The sequence is that of Gastrin-releasing peptide receptor (Grpr) from Rattus norvegicus (Rat).